Reading from the N-terminus, the 254-residue chain is 3-deoxy-manno-octulosonate cytidylyltransferase (254 aa).

Belongs to the KdsB family.

The protein localises to the cytoplasm. It carries out the reaction 3-deoxy-alpha-D-manno-oct-2-ulosonate + CTP = CMP-3-deoxy-beta-D-manno-octulosonate + diphosphate. Its pathway is nucleotide-sugar biosynthesis; CMP-3-deoxy-D-manno-octulosonate biosynthesis; CMP-3-deoxy-D-manno-octulosonate from 3-deoxy-D-manno-octulosonate and CTP: step 1/1. It participates in bacterial outer membrane biogenesis; lipopolysaccharide biosynthesis. In terms of biological role, activates KDO (a required 8-carbon sugar) for incorporation into bacterial lipopolysaccharide in Gram-negative bacteria. This chain is 3-deoxy-manno-octulosonate cytidylyltransferase, found in Pseudomonas putida (strain GB-1).